Consider the following 443-residue polypeptide: Glutamyl-tRNA reductase (443 aa).

Residues 49–52 (TCNR), S109, 114–116 (EQQ), and Q120 each bind substrate. C50 acts as the Nucleophile in catalysis. 189–194 (GAGSMG) is an NADP(+) binding site.

Belongs to the glutamyl-tRNA reductase family. Homodimer.

It catalyses the reaction (S)-4-amino-5-oxopentanoate + tRNA(Glu) + NADP(+) = L-glutamyl-tRNA(Glu) + NADPH + H(+). It functions in the pathway porphyrin-containing compound metabolism; protoporphyrin-IX biosynthesis; 5-aminolevulinate from L-glutamyl-tRNA(Glu): step 1/2. Its function is as follows. Catalyzes the NADPH-dependent reduction of glutamyl-tRNA(Glu) to glutamate 1-semialdehyde (GSA). The sequence is that of Glutamyl-tRNA reductase from Mycobacteroides abscessus (strain ATCC 19977 / DSM 44196 / CCUG 20993 / CIP 104536 / JCM 13569 / NCTC 13031 / TMC 1543 / L948) (Mycobacterium abscessus).